The sequence spans 121 residues: Protein PilH (121 aa).

The 117-residue stretch at 3-119 (RILIVDDSPT…TLLKTINAVL (117 aa)) folds into the Response regulatory domain. Asp-52 is subject to 4-aspartylphosphate.

Its function is as follows. May be a part of a signal-transduction system that regulates twitching motility by controlling pilus function (extension and retraction). The polypeptide is Protein PilH (pilH) (Pseudomonas aeruginosa (strain ATCC 15692 / DSM 22644 / CIP 104116 / JCM 14847 / LMG 12228 / 1C / PRS 101 / PAO1)).